Consider the following 81-residue polypeptide: Trefoil factor 3 (81 aa).

The first 22 residues, M1 to A22, serve as a signal peptide directing secretion. Residues S31–L74 enclose the P-type domain. Disulfide bonds link C33-C59, C43-C58, and C53-C70.

As to quaternary structure, monomer. Homodimer; disulfide-linked. As to expression, expressed in goblet cells of the intestines, and colon, in paraventricular hypothalamus and supraoptic nuclei. Weakly expressed in gastric epithelial cells (at protein level). Expressed by goblet cells of small and large intestinal epithelia, kidney and stomach. Expressed in the paraventricular hypothalamus, arcuate nucleus and amygdala of the brain. Weakly expressed in gastric epithelial cells.

The protein resides in the secreted. Its subcellular location is the extracellular space. The protein localises to the extracellular matrix. It is found in the cytoplasm. In terms of biological role, involved in the maintenance and repair of the intestinal mucosa. Promotes the mobility of epithelial cells in healing processes (motogen). This chain is Trefoil factor 3 (Tff3), found in Rattus norvegicus (Rat).